The chain runs to 245 residues: Putative outer membrane protein RBE_0022 (245 aa).

An N-terminal signal peptide occupies residues methionine 1–alanine 23.

The protein belongs to the OmpW/AlkL family.

It localises to the cell outer membrane. The polypeptide is Putative outer membrane protein RBE_0022 (Rickettsia bellii (strain RML369-C)).